A 387-amino-acid polypeptide reads, in one-letter code: Phosphoglycerate kinase (387 aa).

Residues 21 to 23 (DLN), R36, and 59 to 62 (HLGR) contribute to the substrate site. K84 is subject to N6-acetyllysine. Substrate contacts are provided by R113 and R146. ATP contacts are provided by residues K197, E314, and 340 to 343 (GGDT).

Belongs to the phosphoglycerate kinase family. As to quaternary structure, monomer.

The protein resides in the cytoplasm. It carries out the reaction (2R)-3-phosphoglycerate + ATP = (2R)-3-phospho-glyceroyl phosphate + ADP. It functions in the pathway carbohydrate degradation; glycolysis; pyruvate from D-glyceraldehyde 3-phosphate: step 2/5. This is Phosphoglycerate kinase from Escherichia coli O139:H28 (strain E24377A / ETEC).